Here is a 135-residue protein sequence, read N- to C-terminus: ATP synthase epsilon chain (135 aa).

The protein belongs to the ATPase epsilon chain family. In terms of assembly, F-type ATPases have 2 components, CF(1) - the catalytic core - and CF(0) - the membrane proton channel. CF(1) has five subunits: alpha(3), beta(3), gamma(1), delta(1), epsilon(1). CF(0) has three main subunits: a, b and c.

It localises to the cell inner membrane. Produces ATP from ADP in the presence of a proton gradient across the membrane. The sequence is that of ATP synthase epsilon chain from Rhizobium etli (strain ATCC 51251 / DSM 11541 / JCM 21823 / NBRC 15573 / CFN 42).